Reading from the N-terminus, the 97-residue chain is MSHLRIAVTFLCTLFALTAGAGESCQVGGSAIPVGKTKQELCNLYECATDSNRVVLKKLTCAEQAVKTGCRSVPGDANAPFPDCCPTTLCRGRQWDH.

The signal sequence occupies residues 1-20 (MSHLRIAVTFLCTLFALTAG).

This sequence belongs to the scorpion La1-like peptide family. In terms of processing, contains 4 disulfide bonds. Expressed by the venom gland.

The protein localises to the secreted. The sequence is that of Venom peptide HsVx1 from Heterometrus spinifer (Asia giant forest scorpion).